A 335-amino-acid chain; its full sequence is Putative type I specificity subunit S.MpnORF89P (335 aa).

This sequence belongs to the type-I restriction system S methylase family. As to quaternary structure, the methyltransferase is composed of M and S polypeptides.

Functionally, the specificity (S) subunit of a type I methyltransferase (MTase); this subunit dictates DNA sequence specificity. The single R subunit has multiple frameshifts and is probably not expressed. The polypeptide is Putative type I specificity subunit S.MpnORF89P (Mycoplasma pneumoniae (strain ATCC 29342 / M129 / Subtype 1) (Mycoplasmoides pneumoniae)).